The primary structure comprises 175 residues: uncharacterized protein (175 aa).

This is an uncharacterized protein from Bacillus subtilis (strain 168).